A 367-amino-acid chain; its full sequence is GDP-perosamine synthase (367 aa).

N6-(pyridoxal phosphate)lysine is present on K181.

This sequence belongs to the DegT/DnrJ/EryC1 family. As to quaternary structure, homotetramer. It depends on pyridoxal 5'-phosphate as a cofactor.

It carries out the reaction GDP-alpha-D-perosamine + 2-oxoglutarate = GDP-4-dehydro-alpha-D-rhamnose + L-glutamate. It participates in bacterial outer membrane biogenesis; LPS O-antigen biosynthesis. Functionally, catalyzes the synthesis of GDP-perosamine from GDP-4-keto-6-deoxy-D-mannose and L-glutamate. Also shows weak activity with L-glutamine. The protein is GDP-perosamine synthase of Vibrio cholerae.